We begin with the raw amino-acid sequence, 291 residues long: uncharacterized protein (291 aa).

The protein belongs to the PhyH family.

This is an uncharacterized protein from Mycobacterium bovis (strain ATCC BAA-935 / AF2122/97).